We begin with the raw amino-acid sequence, 299 residues long: Protoheme IX farnesyltransferase (299 aa).

9 helical membrane passes run 25–45 (VVLL…RAGV), 47–67 (WTVL…AAAV), 95–115 (AAAI…LLLF), 119–139 (LAAW…TGFL), 147–167 (IVIG…AVTG), 173–193 (PLLL…ALAI), 218–238 (VHIL…YAIH), 243–263 (LYLV…WVLY), and 279–299 (IWYL…LLNI).

This sequence belongs to the UbiA prenyltransferase family. Protoheme IX farnesyltransferase subfamily.

Its subcellular location is the cell inner membrane. The catalysed reaction is heme b + (2E,6E)-farnesyl diphosphate + H2O = Fe(II)-heme o + diphosphate. It participates in porphyrin-containing compound metabolism; heme O biosynthesis; heme O from protoheme: step 1/1. In terms of biological role, converts heme B (protoheme IX) to heme O by substitution of the vinyl group on carbon 2 of heme B porphyrin ring with a hydroxyethyl farnesyl side group. The protein is Protoheme IX farnesyltransferase of Ectopseudomonas mendocina (strain ymp) (Pseudomonas mendocina).